The chain runs to 376 residues: Chorismate synthase (376 aa).

2 residues coordinate NADP(+): Arg39 and Arg45. FMN contacts are provided by residues 115 to 117, Gly276, 291 to 295, and Arg317; these read RSS and KPIPT.

This sequence belongs to the chorismate synthase family. As to quaternary structure, homotetramer. Requires FMNH2 as cofactor.

It catalyses the reaction 5-O-(1-carboxyvinyl)-3-phosphoshikimate = chorismate + phosphate. It functions in the pathway metabolic intermediate biosynthesis; chorismate biosynthesis; chorismate from D-erythrose 4-phosphate and phosphoenolpyruvate: step 7/7. Its function is as follows. Catalyzes the anti-1,4-elimination of the C-3 phosphate and the C-6 proR hydrogen from 5-enolpyruvylshikimate-3-phosphate (EPSP) to yield chorismate, which is the branch point compound that serves as the starting substrate for the three terminal pathways of aromatic amino acid biosynthesis. This reaction introduces a second double bond into the aromatic ring system. The polypeptide is Chorismate synthase (Thermotoga maritima (strain ATCC 43589 / DSM 3109 / JCM 10099 / NBRC 100826 / MSB8)).